Reading from the N-terminus, the 415-residue chain is S-inosyl-L-homocysteine hydrolase (415 aa).

Substrate-binding residues include D123 and E148. 149–151 (TTT) serves as a coordination point for NAD(+). Residues K178 and D182 each contribute to the substrate site. Residues N183, 212–217 (GYGWCG), E235, 291–293 (AGH), and N337 contribute to the NAD(+) site.

This sequence belongs to the adenosylhomocysteinase family. It depends on NAD(+) as a cofactor.

Its subcellular location is the cytoplasm. The enzyme catalyses S-inosyl-L-homocysteine + H2O = L-homocysteine + inosine. It participates in amino-acid biosynthesis; S-adenosyl-L-methionine biosynthesis. In terms of biological role, catalyzes the hydrolysis of S-inosyl-L-homocysteine (SIH) to L-homocysteine (Hcy) and inosine. Likely functions in a S-adenosyl-L-methionine (SAM) recycling pathway from S-adenosyl-L-homocysteine (SAH) produced from SAM-dependent methylation reactions. Can also catalyze the reverse reaction in vitro, i.e. the synthesis of SIH from Hcy and inosine. In Methanococcus maripaludis (strain DSM 14266 / JCM 13030 / NBRC 101832 / S2 / LL), this protein is S-inosyl-L-homocysteine hydrolase.